A 745-amino-acid polypeptide reads, in one-letter code: Ribosomal protein S6 kinase alpha-6 (745 aa).

Residues 1-28 (MLPFAPQDEPWDREMEVFSGGGASSGEV) form a disordered region. The 258-residue stretch at 73 to 330 (FELLKVLGQG…VEEIKRHLFF (258 aa)) folds into the Protein kinase 1 domain. ATP-binding positions include 79–87 (LGQGSFGKV) and lysine 105. Aspartate 198 functions as the Proton acceptor in the catalytic mechanism. 3 positions are modified to phosphoserine: serine 232, serine 372, and serine 389. An AGC-kinase C-terminal domain is found at 331 to 400 (ANIDWDKLYK…VATSIAEEYK (70 aa)). Residues 426 to 683 (YELKEDIGVG…AEQILKHSWI (258 aa)) enclose the Protein kinase 2 domain. Residues 432–440 (IGVGSYSVC) and lysine 455 contribute to the ATP site. The active-site Proton acceptor is the aspartate 543. A Phosphothreonine modification is found at threonine 581.

This sequence belongs to the protein kinase superfamily. AGC Ser/Thr protein kinase family. S6 kinase subfamily. Forms a complex with MAPK3/ERK1 but not with MAPK9 or MAPK14 in serum-starved cells. Mg(2+) is required as a cofactor. Post-translationally, phosphorylated at Ser-232, Ser-372, and Ser-389 in serum-starved cells.

Its subcellular location is the cytoplasm. The protein localises to the cytosol. It localises to the nucleus. The enzyme catalyses L-seryl-[protein] + ATP = O-phospho-L-seryl-[protein] + ADP + H(+). It carries out the reaction L-threonyl-[protein] + ATP = O-phospho-L-threonyl-[protein] + ADP + H(+). Constitutively activated by phosphorylation at Ser-232, Ser-372, and Ser-389 in serum-starved cells. Does not require growth factor stimulation for significant kinase activity. Constitutively active serine/threonine-protein kinase that exhibits growth-factor-independent kinase activity and that may participate in p53/TP53-dependent cell growth arrest signaling and play an inhibitory role during embryogenesis. This Homo sapiens (Human) protein is Ribosomal protein S6 kinase alpha-6 (RPS6KA6).